Here is a 217-residue protein sequence, read N- to C-terminus: Putative N-acetylmuramoyl-L-alanine amidase (217 aa).

The MurNAc-LAA domain occupies 3-206; it reads IAIDAGHGGQ…ISKSISIALK (204 aa).

It belongs to the N-acetylmuramoyl-L-alanine amidase 3 family.

The protein resides in the secreted. The enzyme catalyses Hydrolyzes the link between N-acetylmuramoyl residues and L-amino acid residues in certain cell-wall glycopeptides.. Functionally, cell-wall hydrolase involved in septum cleavage during cell division. The polypeptide is Putative N-acetylmuramoyl-L-alanine amidase (amiB) (Buchnera aphidicola subsp. Baizongia pistaciae (strain Bp)).